A 75-amino-acid polypeptide reads, in one-letter code: Small ribosomal subunit protein bS21A (75 aa).

Belongs to the bacterial ribosomal protein bS21 family.

The polypeptide is Small ribosomal subunit protein bS21A (rpsU1) (Agrobacterium fabrum (strain C58 / ATCC 33970) (Agrobacterium tumefaciens (strain C58))).